Here is a 3564-residue protein sequence, read N- to C-terminus: CUB and sushi domain-containing protein 1 (3564 aa).

An N-terminal signal peptide occupies residues 1–29 (MTAWRKFKSLLLPLVLAVLCAGLLTAAKG). Topologically, residues 30 to 3487 (QNCGGLVQGP…NHYQGTSSGS (3458 aa)) are extracellular. Cystine bridges form between Cys32/Cys58, Cys145/Cys185, Cys171/Cys202, Cys208/Cys234, Cys349/Cys389, Cys375/Cys406, Cys411/Cys437, Cys527/Cys567, Cys553/Cys580, and Cys584/Cys610. The CUB 1 domain occupies 32–140 (CGGLVQGPNG…QGFKAMYEVL (109 aa)). N-linked (GlcNAc...) asparagine glycosylation is found at Asn40 and Asn57. The Sushi 1 domain maps to 143-204 (HTCGNPGEIL…WDFPAPFCRA (62 aa)). The region spanning 208-312 (CGGTLRGTSG…KGFNAQFQVK (105 aa)) is the CUB 2 domain. The Sushi 2 domain occupies 347–408 (DMCPDPGIPD…WNDHRPICRA (62 aa)). Residues 411–522 (CGSNLRGPSG…PGFKAVYQEI (112 aa)) form the CUB 3 domain. The Sushi 3 domain maps to 525–582 (GGCGDPGIPAYGKRTGSSFLHGDTLTFECQAAFELVGERVITCQKNNQWSGNKPSCVF). In terms of domain architecture, CUB 4 spans 584 to 692 (CFFNFTAPSG…RGFNITYTTF (109 aa)). Asn587 and Asn686 each carry an N-linked (GlcNAc...) asparagine glycan. Residues 695 to 756 (NECHDPGIPV…WSSTVPRCEA (62 aa)) enclose the Sushi 4 domain. 6 disulfides stabilise this stretch: Cys697/Cys738, Cys723/Cys754, Cys758/Cys784, Cys873/Cys913, Cys899/Cys926, and Cys930/Cys956. The CUB 5 domain occupies 758-866 (CGGHLTASSG…VGFLIHYESV (109 aa)). Residues 871–928 (DSCLDPGIPVNGQRHGSNFGIRSTVTFSCDPGYTLSDDEPLVCEKNHQWNHALPSCDA) form the Sushi 5 domain. The region spanning 930–1040 (CGGYIHGKSG…EGFNITFAEY (111 aa)) is the CUB 6 domain. N-linked (GlcNAc...) asparagine glycans are attached at residues Asn955, Asn1015, and Asn1034. In terms of domain architecture, Sushi 6 spans 1043–1102 (EPCDDPGVPAFSRRIGFQFGVGDTLAFTCFQGYRLEGATKLTCLGGGRRVWSAPLPRCVA). Cystine bridges form between Cys1045/Cys1085, Cys1071/Cys1100, and Cys1104/Cys1130. In terms of domain architecture, CUB 7 spans 1104–1212 (CGASVKGNEG…QGFQLTYTSF (109 aa)). Residues Asn1184 and Asn1197 are each glycosylated (N-linked (GlcNAc...) asparagine). One can recognise a Sushi 7 domain in the interval 1215–1275 (VKCEDPGIPN…WDKPMPSCVA (61 aa)). 12 disulfides stabilise this stretch: Cys1217–Cys1258, Cys1244–Cys1273, Cys1277–Cys1304, Cys1391–Cys1431, Cys1417–Cys1447, Cys1451–Cys1477, Cys1564–Cys1604, Cys1590–Cys1621, Cys1625–Cys1651, Cys1741–Cys1781, Cys1767–Cys1798, and Cys1802–Cys1828. Positions 1277-1386 (CGGLVHAATS…SGFSIQFSTS (110 aa)) constitute a CUB 8 domain. The Sushi 8 domain occupies 1389–1449 (STCNDPGMPQ…WQPDPPSCIA (61 aa)). An N-linked (GlcNAc...) asparagine glycan is attached at Asn1399. A CUB 9 domain is found at 1451 to 1559 (CGGNLTGPAG…SGFAIEFKEK (109 aa)). Residues Asn1454 and Asn1572 are each glycosylated (N-linked (GlcNAc...) asparagine). In terms of domain architecture, Sushi 9 spans 1562–1623 (EACFDPGNIM…WDRALPACQA (62 aa)). A CUB 10 domain is found at 1625-1733 (CGGQYTGSEG…RGFHFVYQAV (109 aa)). Asn1644 is a glycosylation site (N-linked (GlcNAc...) asparagine). A Sushi 10 domain is found at 1739–1800 (TQCSSVPEPR…WNDTIPSCVV (62 aa)). 3 N-linked (GlcNAc...) asparagine glycosylation sites follow: Asn1792, Asn1805, and Asn1882. Residues 1802–1910 (CSGNFTQRRG…AGFHLEYKTV (109 aa)) enclose the CUB 11 domain. Positions 1913–1972 (AACQEPALPSNGIKIGDRYMVNDVLSFQCEPGYTLQGRSHISCMPGTVRRWNYPSPLCIA) constitute a Sushi 11 domain. 3 disulfide bridges follow: Cys1915–Cys1955, Cys1941–Cys1970, and Cys1974–Cys2000. The CUB 12 domain occupies 1974–2082 (CGGTLTSMSG…QGFKLSYQAY (109 aa)). The N-linked (GlcNAc...) asparagine glycan is linked to Asn2018. Positions 2085-2144 (QNCPDPPAFQNGFMINSDYSVGQSISFECYPGYILLGHPVLTCQHGTDRNWNYPFPRCDA) constitute a Sushi 12 domain. 3 cysteine pairs are disulfide-bonded: Cys2087–Cys2127, Cys2113–Cys2142, and Cys2146–Cys2172. Residues 2146–2257 (CGYNVTSQNG…LNFHAFQLKR (112 aa)) enclose the CUB 13 domain. Asn2149, Asn2154, and Asn2187 each carry an N-linked (GlcNAc...) asparagine glycan. The region spanning 2256 to 2317 (KRCPPPPAVP…FQGSPPTCEA (62 aa)) is the Sushi 13 domain. 3 disulfide bridges follow: Cys2258–Cys2300, Cys2286–Cys2315, and Cys2319–Cys2347. The CUB 14 domain occupies 2319-2430 (CPANEVRTES…KGFKIRYAAP (112 aa)). N-linked (GlcNAc...) asparagine glycosylation is found at Asn2358, Asn2394, Asn2400, Asn2445, Asn2470, and Asn2503. 15 consecutive Sushi domains span residues 2430 to 2492 (PYCS…LCQA), 2493 to 2554 (VSCG…TCKP), 2555 to 2619 (VPCP…RCKV), 2620 to 2677 (ISCG…RCLA), 2678 to 2735 (GHCG…VCVP), 2736 to 2793 (ITCG…ICRV), 2794 to 2856 (VNCS…KCLA), 2857 to 2914 (ISCG…HCSG), 2918 to 2975 (GFCG…VCEA), 2976 to 3034 (VSCG…DCTI), 3035 to 3094 (ISCG…LCKA), 3095 to 3152 (VLCN…QCLP), 3153 to 3210 (VFCG…TCID), 3214 to 3272 (TACP…ECIP), and 3273 to 3332 (HACR…VCKS). 12 disulfides stabilise this stretch: Cys2432-Cys2473, Cys2459-Cys2490, Cys2495-Cys2537, Cys2521-Cys2552, Cys2557-Cys2602, Cys2588-Cys2617, Cys2622-Cys2662, Cys2648-Cys2675, Cys2680-Cys2720, Cys2706-Cys2733, Cys2738-Cys2778, and Cys2764-Cys2791. A glycan (N-linked (GlcNAc...) asparagine) is linked at Asn2605. Asn2750 and Asn2761 each carry an N-linked (GlcNAc...) asparagine glycan. A glycan (N-linked (GlcNAc...) asparagine) is linked at Asn2795. Intrachain disulfides connect Cys2796–Cys2841, Cys2827–Cys2854, Cys2859–Cys2899, Cys2885–Cys2912, Cys2920–Cys2960, Cys2946–Cys2973, Cys2978–Cys3019, Cys3005–Cys3032, Cys3037–Cys3079, Cys3063–Cys3092, Cys3097–Cys3137, Cys3123–Cys3150, Cys3155–Cys3195, Cys3181–Cys3208, Cys3216–Cys3257, Cys3243–Cys3270, Cys3275–Cys3317, and Cys3302–Cys3330. Asn2894 carries an N-linked (GlcNAc...) asparagine glycan. Asn2963 carries an N-linked (GlcNAc...) asparagine glycan. 3 N-linked (GlcNAc...) asparagine glycosylation sites follow: Asn3022, Asn3056, and Asn3086. 2 N-linked (GlcNAc...) asparagine glycosylation sites follow: Asn3228 and Asn3260. N-linked (GlcNAc...) asparagine glycans are attached at residues Asn3339, Asn3379, and Asn3386. The chain crosses the membrane as a helical span at residues 3488–3508 (VAAAILVPFFALILSGFAFYL). Over 3509-3564 (YKHRTRPKVQYNGYAGHENSNGQASFENPMYDTNLKPTEAKAVRFDTTLNTVCTVV) the chain is Cytoplasmic.

The protein belongs to the CSMD family.

The protein resides in the membrane. This Mus musculus (Mouse) protein is CUB and sushi domain-containing protein 1 (Csmd1).